The chain runs to 452 residues: Tripartite motif-containing protein 49 (452 aa).

The RING-type zinc finger occupies 15–56 (CPLCMNYFIDPVTIDCGHSFCRPCFYLNWQDIPFLVQCSECT). The B box-type zinc finger occupies 88–129 (SEEQMCGTHRETKKIFCEVDRSLLCLLCSSSQEHRYHRHRPI). C93, H96, C115, and H121 together coordinate Zn(2+). A B30.2/SPRY domain is found at 269-452 (ELSAGPITGL…LRPIFCCIHF (184 aa)).

The protein belongs to the TRIM/RBCC family. As to expression, preferentially expressed in testis.

This is Tripartite motif-containing protein 49 (TRIM49) from Homo sapiens (Human).